We begin with the raw amino-acid sequence, 302 residues long: Homoserine O-acetyltransferase (302 aa).

Residue Cys-142 is the Acyl-thioester intermediate of the active site. Positions 163 and 192 each coordinate substrate. His-235 serves as the catalytic Proton acceptor. Glu-237 is a catalytic residue. Arg-249 lines the substrate pocket.

This sequence belongs to the MetA family.

The protein localises to the cytoplasm. The enzyme catalyses L-homoserine + acetyl-CoA = O-acetyl-L-homoserine + CoA. It participates in amino-acid biosynthesis; L-methionine biosynthesis via de novo pathway; O-acetyl-L-homoserine from L-homoserine: step 1/1. Functionally, transfers an acetyl group from acetyl-CoA to L-homoserine, forming acetyl-L-homoserine. This chain is Homoserine O-acetyltransferase, found in Clostridium novyi (strain NT).